A 422-amino-acid chain; its full sequence is FAD-dependent monooxygenase ptmM (422 aa).

The helical transmembrane segment at 8-24 (VIIVGGSIAGLTLAHCL) threads the bilayer. 5 residues coordinate FAD: Glu35, Gly49, Arg108, Asp308, and Ala321.

Belongs to the paxM FAD-dependent monooxygenase family. FAD serves as cofactor.

The protein resides in the membrane. The protein operates within secondary metabolite biosynthesis. In terms of biological role, FAD-dependent monooxygenase; part of the gene cluster that mediates the biosynthesis of the indole diterpenes penitrems. The geranylgeranyl diphosphate (GGPP) synthase ptmG catalyzes the first step in penitrem biosynthesis via conversion of farnesyl pyrophosphate and isopentyl pyrophosphate into geranylgeranyl pyrophosphate (GGPP). Condensation of indole-3-glycerol phosphate with GGPP by the prenyl transferase ptmC then forms 3-geranylgeranylindole (3-GGI). Epoxidation by the FAD-dependent monooxygenase ptmM leads to a epoxidized-GGI that is substrate of the terpene cyclase ptmB for cyclization to yield paspaline. Paspaline is subsequently converted to 13-desoxypaxilline by the cytochrome P450 monooxygenase ptmP, the latter being then converted to paxilline by the cytochrome P450 monooxygenase ptmQ. Paxilline is converted to beta-paxitriol via C-10 ketoreduction by the short-chain dehydrogenase ptmH which can be monoprenylated at the C-20 by the indole diterpene prenyltransferase ptmD. A two-step elimination (acetylation and elimination) process performed by the O-acetyltransferase ptmV and ptmI leads to the production of the prenylated form of penijanthine. The FAD-linked oxidoreductase ptmO then converts the prenylated form of penijanthine into PC-M5 which is in turn transformed into PC-M4 by the aromatic dimethylallyltransferase ptmE. Five sequential oxidative transformations performed by the cytochrome P450 monooxygenases ptmK, ptmU, ptmL, ptmN and ptmJ yield the various penitrem compounds. PtmK, ptmU and ptmM are involved in the formation of the key bicyclic ring of penitrem C via the formation of the intermediates secopenitrem D and penitrem D. PtmL catalyzes the epoxidation of penitrem D and C to yield penitrem B and F, respectively. PtmJ catalyzes the last benzylic hydroxylation to convert penitrem B to prenitrem E and penitrem F to penitrem A. In Penicillium ochrochloron, this protein is FAD-dependent monooxygenase ptmM.